Consider the following 971-residue polypeptide: Exportin-2 (971 aa).

The residue at position 1 (Met1) is an N-acetylmethionine. The 74-residue stretch at 29 to 102 (AEKFLESVEG…KANIVHLMLS (74 aa)) folds into the Importin N-terminal domain. Ser112 bears the Phosphoserine mark. An N6-acetyllysine mark is found at Lys574 and Lys824. Ser931 is modified (phosphoserine).

Belongs to the XPO2/CSE1 family. Found in a complex with CSE1L/XPO2, Ran and KPNA2. Binds with high affinity to importin-alpha only in the presence of RanGTP. The complex is dissociated by the combined action of RanBP1 and RanGAP1. Interacts with CFTR. Ubiquitous. Detected in embryos from 5 to 17 dpc. Highly expressed in adult testis, heart, brain, lung, liver, skeletal muscle, spleen and kidney.

Its subcellular location is the cytoplasm. The protein resides in the nucleus. Export receptor for importin-alpha. Mediates importin-alpha re-export from the nucleus to the cytoplasm after import substrates (cargos) have been released into the nucleoplasm. In the nucleus binds cooperatively to importin-alpha and to the GTPase Ran in its active GTP-bound form. Docking of this trimeric complex to the nuclear pore complex (NPC) is mediated through binding to nucleoporins. Upon transit of a nuclear export complex into the cytoplasm, disassembling of the complex and hydrolysis of Ran-GTP to Ran-GDP (induced by RANBP1 and RANGAP1, respectively) cause release of the importin-alpha from the export receptor. CSE1L/XPO2 then return to the nuclear compartment and mediate another round of transport. The directionality of nuclear export is thought to be conferred by an asymmetric distribution of the GTP- and GDP-bound forms of Ran between the cytoplasm and nucleus. This is Exportin-2 (Cse1l) from Mus musculus (Mouse).